Reading from the N-terminus, the 298-residue chain is Iron-regulated virulence regulatory protein IrgB (298 aa).

The region spanning 1–59 is the HTH lysR-type domain; it reads MQDLSAVKAFHALCQHKSLTAAAKALEQPKSTLSRRLAQLEEDLGQSLLMRQGNRLTLT. A DNA-binding region (H-T-H motif) is located at residues 19-38; the sequence is LTAAAKALEQPKSTLSRRLA.

The protein belongs to the LysR transcriptional regulatory family.

Functionally, transcription activation of the irgA gene. In the presence of sufficient iron, transcription of both irgA and irgB is negatively regulated by a fur-like protein. In low iron conditions, negative regulation of transcription is removed, and production of IrgB leads to positive transcriptional activation of irgA. The chain is Iron-regulated virulence regulatory protein IrgB (irgB) from Vibrio cholerae serotype O1 (strain ATCC 39541 / Classical Ogawa 395 / O395).